A 208-amino-acid polypeptide reads, in one-letter code: Ribosomal RNA large subunit methyltransferase E (208 aa).

Positions 62, 64, 82, 98, and 123 each coordinate S-adenosyl-L-methionine. Lysine 163 (proton acceptor) is an active-site residue.

The protein belongs to the class I-like SAM-binding methyltransferase superfamily. RNA methyltransferase RlmE family.

Its subcellular location is the cytoplasm. It carries out the reaction uridine(2552) in 23S rRNA + S-adenosyl-L-methionine = 2'-O-methyluridine(2552) in 23S rRNA + S-adenosyl-L-homocysteine + H(+). Specifically methylates the uridine in position 2552 of 23S rRNA at the 2'-O position of the ribose in the fully assembled 50S ribosomal subunit. This is Ribosomal RNA large subunit methyltransferase E from Idiomarina loihiensis (strain ATCC BAA-735 / DSM 15497 / L2-TR).